A 653-amino-acid polypeptide reads, in one-letter code: Protease 1 (653 aa).

The segment at residues 1–20 (MKRICGSLLLLGLSISAALA) is a signal peptide (or 27). The propeptide occupies 21–205 (APASRPAAFD…RRLAAASGEK (185 aa)). Cystine bridges form between Cys-211-Cys-421, Cys-217-Cys-285, and Cys-241-Cys-263. Residues His-262, Asp-318, and Ser-399 each act as charge relay system in the active site. Residues 474-553 (NTPPVANFTS…TNTKTGSVTV (80 aa)) form the PKD domain. Positions 474–653 (NTPPVANFTS…AAQRAPGSCG (180 aa)) are cleaved as a propeptide — thr/Ser-rich. Residues 555–653 (GGPGAQTYTN…AAQRAPGSCG (99 aa)) form the P/Homo B domain.

It belongs to the peptidase S1 family. In terms of processing, three disulfide bonds are present.

Its subcellular location is the secreted. It carries out the reaction Preferential cleavage: Lys-|-Xaa, including Lys-|-Pro.. This is Protease 1 from Achromobacter lyticus.